Reading from the N-terminus, the 278-residue chain is Extracellular metalloprotease GLRG_06511 (278 aa).

An N-terminal signal peptide occupies residues 1 to 19; the sequence is MQFKSLLVSALAAASTALA. N-linked (GlcNAc...) asparagine glycosylation occurs at N51. H190 contacts Zn(2+). The active site involves E191. Residue H194 participates in Zn(2+) binding. C227 and C254 are disulfide-bonded.

It belongs to the peptidase M43B family.

Its subcellular location is the secreted. Secreted metalloproteinase that allows assimilation of proteinaceous substrates. This is Extracellular metalloprotease GLRG_06511 from Colletotrichum graminicola (strain M1.001 / M2 / FGSC 10212) (Maize anthracnose fungus).